We begin with the raw amino-acid sequence, 251 residues long: Ditrans,polycis-undecaprenyl-diphosphate synthase ((2E,6E)-farnesyl-diphosphate specific) (251 aa).

The active site involves Asp20. Asp20 contacts Mg(2+). Substrate-binding positions include 21–24 (GNGR), Trp25, Arg33, His37, and 65–67 (SSE). The active-site Proton acceptor is the Asn68. Substrate contacts are provided by residues Trp69, Arg71, Arg188, and 194-196 (RIS). Residue Glu207 coordinates Mg(2+).

It belongs to the UPP synthase family. Homodimer. Requires Mg(2+) as cofactor.

The enzyme catalyses 8 isopentenyl diphosphate + (2E,6E)-farnesyl diphosphate = di-trans,octa-cis-undecaprenyl diphosphate + 8 diphosphate. Its function is as follows. Catalyzes the sequential condensation of isopentenyl diphosphate (IPP) with (2E,6E)-farnesyl diphosphate (E,E-FPP) to yield (2Z,6Z,10Z,14Z,18Z,22Z,26Z,30Z,34E,38E)-undecaprenyl diphosphate (di-trans,octa-cis-UPP). UPP is the precursor of glycosyl carrier lipid in the biosynthesis of bacterial cell wall polysaccharide components such as peptidoglycan and lipopolysaccharide. This chain is Ditrans,polycis-undecaprenyl-diphosphate synthase ((2E,6E)-farnesyl-diphosphate specific), found in Vibrio vulnificus (strain CMCP6).